The primary structure comprises 103 residues: Methane monooxygenase component D (103 aa).

The soluble methane monooxygenase (sMMO) consists of four components A/MMOH (composed of alpha/MmoX, beta/MmoY and gamma/MmoZ), B/MMOB (MmoB), C/MMOR (MmoC) and D/MMOD (MmoD).

The chain is Methane monooxygenase component D (mmoD) from Methylococcus capsulatus (strain ATCC 33009 / NCIMB 11132 / Bath).